A 617-amino-acid polypeptide reads, in one-letter code: uncharacterized protein (617 aa).

Residues 10–30 (AFFFFFVSLILLFLSPSYSDV) form a helical membrane-spanning segment. Residues 34-58 (ESDPIPYENSDASPGVVTSSESDRQ) form a disordered region. Residues 43–53 (SDASPGVVTSS) are compositionally biased toward polar residues. Positions 60 to 86 (VSLHRLEELVRNLTELVARLDAKLSET) form a coiled coil. A helical transmembrane segment spans residues 473-493 (MLWSSPVFFFILFLFGAWHFF). Residues 511-529 (STTMSSSSTTTAQNSSAFS) show a composition bias toward low complexity. The tract at residues 511-617 (STTMSSSSTT…GNNKALDDES (107 aa)) is disordered. Residues 531 to 543 (STRRNDDHMDLRR) are compositionally biased toward basic and acidic residues. Over residues 563 to 584 (VGSNDPSSRAPVETTNYRTTAQ) the composition is skewed to polar residues. Residues 590–599 (GGSGLDSGGF) show a composition bias toward gly residues.

The protein localises to the membrane. This is an uncharacterized protein from Arabidopsis thaliana (Mouse-ear cress).